The chain runs to 251 residues: Small ribosomal subunit protein uS2 (251 aa).

Ser2 carries the post-translational modification N-acetylserine. Residues 209–251 are disordered; sequence EIEQQTAEEAAQEAGEEEAKEEVTEEQTEAAEWAQENADNVEW. The segment covering 218–237 has biased composition (acidic residues); the sequence is AAQEAGEEEAKEEVTEEQTE. A compositionally biased stretch (low complexity) spans 238-251; sequence AAEWAQENADNVEW.

It belongs to the universal ribosomal protein uS2 family. Component of the small ribosomal subunit. Mature ribosomes consist of a small (40S) and a large (60S) subunit. The 40S subunit contains about 33 different proteins and 1 molecule of RNA (18S). The 60S subunit contains about 49 different proteins and 3 molecules of RNA (25S, 5.8S and 5S). Interacts with RPS21.

It localises to the cytoplasm. Required for the assembly and/or stability of the 40S ribosomal subunit. Required for the processing of the 20S rRNA-precursor to mature 18S rRNA in a late step of the maturation of 40S ribosomal subunits. This Candida glabrata (strain ATCC 2001 / BCRC 20586 / JCM 3761 / NBRC 0622 / NRRL Y-65 / CBS 138) (Yeast) protein is Small ribosomal subunit protein uS2.